The sequence spans 345 residues: Histidinol-phosphate aminotransferase (345 aa).

Lys206 is subject to N6-(pyridoxal phosphate)lysine.

This sequence belongs to the class-II pyridoxal-phosphate-dependent aminotransferase family. Histidinol-phosphate aminotransferase subfamily. Homodimer. It depends on pyridoxal 5'-phosphate as a cofactor.

The catalysed reaction is L-histidinol phosphate + 2-oxoglutarate = 3-(imidazol-4-yl)-2-oxopropyl phosphate + L-glutamate. The protein operates within amino-acid biosynthesis; L-histidine biosynthesis; L-histidine from 5-phospho-alpha-D-ribose 1-diphosphate: step 7/9. In Bacteroides fragilis (strain YCH46), this protein is Histidinol-phosphate aminotransferase.